The chain runs to 297 residues: MRHLLGIEGWRRDELESLLDRAKAHLPGGPDTTHLLRGKVVANLFFEDSTRTRTSFHMAAKGLGASVLNWTHTGSSVSKGETLLDTARNIEATGPVAIVMRHRSSGAPHLVAKHVKCAVINAGDGTHEHPSQALLDAFTLRQRWGSLDGRTVLIVGDVLHSRVARSNLHCLKALGAQVVMCGPPTLLPPGLESLGAEVTHNLDAALPRADAVMCLRVQLERQEQAFLPSTREYARLFGLNAAREERMKAGAVVMHPGPINRGVELAPAVADGARSVILEQVSNGVAVRRAILEVCTA.

Residues R51 and T52 each coordinate carbamoyl phosphate. K79 serves as a coordination point for L-aspartate. Residues R101, H129, and Q132 each coordinate carbamoyl phosphate. The L-aspartate site is built by R162 and R216. G257 and P258 together coordinate carbamoyl phosphate.

The protein belongs to the aspartate/ornithine carbamoyltransferase superfamily. ATCase family. Heterododecamer (2C3:3R2) of six catalytic PyrB chains organized as two trimers (C3), and six regulatory PyrI chains organized as three dimers (R2).

The catalysed reaction is carbamoyl phosphate + L-aspartate = N-carbamoyl-L-aspartate + phosphate + H(+). The protein operates within pyrimidine metabolism; UMP biosynthesis via de novo pathway; (S)-dihydroorotate from bicarbonate: step 2/3. In terms of biological role, catalyzes the condensation of carbamoyl phosphate and aspartate to form carbamoyl aspartate and inorganic phosphate, the committed step in the de novo pyrimidine nucleotide biosynthesis pathway. This chain is Aspartate carbamoyltransferase catalytic subunit, found in Myxococcus xanthus (strain DK1622).